Consider the following 56-residue polypeptide: Single-pass membrane and coiled-coil domain-containing protein 4 homolog (56 aa).

The disordered stretch occupies residues 1–27 (MRQLPGKAAKETRKMKRERKQQNKEGH). Residues 9–31 (AKETRKMKRERKQQNKEGHNRVV) are a coiled coil. The chain crosses the membrane as a helical span at residues 30 to 50 (VVTVAIPVCLAVFVMLIVYVY).

This sequence belongs to the SMCO4 family.

The protein resides in the membrane. This chain is Single-pass membrane and coiled-coil domain-containing protein 4 homolog, found in Nematostella vectensis (Starlet sea anemone).